A 188-amino-acid polypeptide reads, in one-letter code: Probable chemoreceptor glutamine deamidase CheD (188 aa).

The protein belongs to the CheD family.

It catalyses the reaction L-glutaminyl-[protein] + H2O = L-glutamyl-[protein] + NH4(+). In terms of biological role, probably deamidates glutamine residues to glutamate on methyl-accepting chemotaxis receptors (MCPs), playing an important role in chemotaxis. This Caulobacter sp. (strain K31) protein is Probable chemoreceptor glutamine deamidase CheD.